The primary structure comprises 555 residues: Membrane protein insertase YidC (555 aa).

The helical transmembrane segment at 7-24 (ILWVIFSMSLVLLYDNWQ) threads the bilayer. Composition is skewed to low complexity over residues 40-54 (QQAA…TPQA) and 64-81 (AAPG…QPVG). The interval 40–81 (QQAAPAGAGGATPQADVPKANATNAAPGTVPAAPQAAAQPVG) is disordered. Transmembrane regions (helical) follow at residues 334–354 (LELV…FWLL), 360–380 (FLGN…LVFF), 430–450 (LGGC…YWVL), 468–488 (LSVP…MFVQ), and 503–523 (VMMI…AGLV).

It belongs to the OXA1/ALB3/YidC family. Type 1 subfamily. As to quaternary structure, interacts with the Sec translocase complex via SecD. Specifically interacts with transmembrane segments of nascent integral membrane proteins during membrane integration.

It is found in the cell inner membrane. Functionally, required for the insertion and/or proper folding and/or complex formation of integral membrane proteins into the membrane. Involved in integration of membrane proteins that insert both dependently and independently of the Sec translocase complex, as well as at least some lipoproteins. Aids folding of multispanning membrane proteins. The polypeptide is Membrane protein insertase YidC (Cupriavidus metallidurans (strain ATCC 43123 / DSM 2839 / NBRC 102507 / CH34) (Ralstonia metallidurans)).